The chain runs to 602 residues: Elongation factor 4 (602 aa).

The 183-residue stretch at 7–189 (SKIRNFCIIA…AIVRRVPAPQ (183 aa)) folds into the tr-type G domain. Residues 19–24 (DHGKST) and 136–139 (NKVD) contribute to the GTP site.

This sequence belongs to the TRAFAC class translation factor GTPase superfamily. Classic translation factor GTPase family. LepA subfamily.

The protein localises to the cell inner membrane. It carries out the reaction GTP + H2O = GDP + phosphate + H(+). Its function is as follows. Required for accurate and efficient protein synthesis under certain stress conditions. May act as a fidelity factor of the translation reaction, by catalyzing a one-codon backward translocation of tRNAs on improperly translocated ribosomes. Back-translocation proceeds from a post-translocation (POST) complex to a pre-translocation (PRE) complex, thus giving elongation factor G a second chance to translocate the tRNAs correctly. Binds to ribosomes in a GTP-dependent manner. The polypeptide is Elongation factor 4 (Prochlorococcus marinus (strain MIT 9312)).